The sequence spans 315 residues: tRNA pseudouridine synthase B (315 aa).

Catalysis depends on aspartate 54, which acts as the Nucleophile.

This sequence belongs to the pseudouridine synthase TruB family. Type 1 subfamily.

The enzyme catalyses uridine(55) in tRNA = pseudouridine(55) in tRNA. Its function is as follows. Responsible for synthesis of pseudouridine from uracil-55 in the psi GC loop of transfer RNAs. In Agrobacterium fabrum (strain C58 / ATCC 33970) (Agrobacterium tumefaciens (strain C58)), this protein is tRNA pseudouridine synthase B.